The sequence spans 310 residues: MSKANLLHTDNNMKITLFSEVSVGISANSILFVVHLCKLLHENKPKPIDLYIAFFSITQLMLLITMGLIAVDMFMPWGRWDSTTCQSLIYLHRLLRGLTFCATCLLNVLWTITLSPRSSCLTKFKHKSPHHISGAFLFFCVLYMSFSSHLLVSIIATFNSTSDNFLYVTQSCSILPVSYSRTSILSTMMTMREAFLIGLMALSSGYVVVLLWRHKKQARHLHSTSLSSKASPEQRATSTIMLLMGFFVVLYILDTVIFQARLKFKDVSTFFCVKIIISHSYATFSPFVFICNDKYMIKFVTSMCGRIVNV.

The Extracellular portion of the chain corresponds to M1–T16. A helical membrane pass occupies residues L17 to C37. The Cytoplasmic portion of the chain corresponds to K38 to L50. Residues Y51–V71 form a helical membrane-spanning segment. The Extracellular portion of the chain corresponds to D72–R93. Cysteines 85 and 172 form a disulfide. Residues L94–L114 traverse the membrane as a helical segment. Residues S115 to G134 lie on the Cytoplasmic side of the membrane. Residues A135–I155 form a helical membrane-spanning segment. At A156–E193 the chain is on the extracellular side. N-linked (GlcNAc...) asparagine glycosylation occurs at N159. Residues A194–H214 traverse the membrane as a helical segment. Residues K215–T237 are Cytoplasmic-facing. The chain crosses the membrane as a helical span at residues S238–F258. Topologically, residues Q259 to T269 are extracellular. A helical membrane pass occupies residues F270–I290. Topologically, residues C291–V310 are cytoplasmic.

This sequence belongs to the G-protein coupled receptor 1 family. Expressed in a subset of sensory neurons located in the apical layer of the vomeronasal organ.

The protein localises to the cell membrane. Putative pheromone receptor implicated in the regulation of social and reproductive behavior. The polypeptide is Vomeronasal type-1 receptor 50 (Vmn1r50) (Mus musculus (Mouse)).